Here is an 84-residue protein sequence, read N- to C-terminus: FCRKMTQGKCKPVNTFGHESLANVQAVCSQKKVICKNGLSNCYQSNSAIHYTDCRKTGSSNYPNCAYKTTRAEKRIIVACEGNL.

Cystine bridges form between Cys10–Cys65, Cys28–Cys80, and Cys35–Cys42. Substrate contacts are provided by residues 11-15, Lys36, and Arg55; that span reads KPVNT.

This sequence belongs to the pancreatic ribonuclease family. Homodimer; disulfide-linked.

Its subcellular location is the secreted. The catalysed reaction is an [RNA] containing cytidine + H2O = an [RNA]-3'-cytidine-3'-phosphate + a 5'-hydroxy-ribonucleotide-3'-[RNA].. It carries out the reaction an [RNA] containing uridine + H2O = an [RNA]-3'-uridine-3'-phosphate + a 5'-hydroxy-ribonucleotide-3'-[RNA].. The polypeptide is Seminal ribonuclease (SRN) (Giraffa camelopardalis (Giraffe)).